We begin with the raw amino-acid sequence, 598 residues long: uncharacterized protein (598 aa).

Serine 46 is modified (phosphoserine). The SAC domain occupies 106 to 441 (LQNHLKTGPF…ADYISLSYSG (336 aa)). 2 helical membrane-spanning segments follow: residues 508–528 (TIRC…MTLF) and 535–555 (ILPP…SLYY).

The protein localises to the endoplasmic reticulum membrane. This is an uncharacterized protein from Schizosaccharomyces pombe (strain 972 / ATCC 24843) (Fission yeast).